Here is a 98-residue protein sequence, read N- to C-terminus: Histone H4-1 (98 aa).

Positions 1–14 (MGGKGGKGGKGLGK) are enriched in gly residues. Residues 1-20 (MGGKGGKGGKGLGKVGAKKR) are disordered.

Belongs to the histone H4 family. The nucleosome is a histone octamer containing two molecules each of H2A, H2B, H3 and H4 assembled in one H3-H4 heterotetramer and two H2A-H2B heterodimers. The octamer wraps approximately 147 bp of DNA.

Its subcellular location is the nucleus. The protein localises to the chromosome. Core component of nucleosome. Nucleosomes wrap and compact DNA into chromatin, limiting DNA accessibility to the cellular machineries which require DNA as a template. Histones thereby play a central role in transcription regulation, DNA repair, DNA replication and chromosomal stability. DNA accessibility is regulated via a complex set of post-translational modifications of histones, also called histone code, and nucleosome remodeling. In Blepharisma japonicum, this protein is Histone H4-1.